The following is an 890-amino-acid chain: Possible lysine-specific histone demethylase 1 (890 aa).

Residues 1–13 (MKPTQFGGSSSKM) are compositionally biased toward polar residues. Residues 1-164 (MKPTQFGGSS…TVLSGQEGAV (164 aa)) are disordered. 2 positions are modified to phosphoserine: Ser-24 and Ser-27. A compositionally biased stretch (polar residues) spans 84–109 (NRPSGSGDTASNDKSGSASMGPNNQQ). A compositionally biased stretch (basic and acidic residues) spans 110 to 122 (AERRSQSQTRKSE). Residues 123–138 (ANATSSSVSGPSAGNS) show a composition bias toward low complexity. An SWIRM domain is found at 160–259 (QEGAVFQSRL…FGIFKRLKPI (100 aa)). 267–295 (VIVIGAGISGLAVAHQLQQFGMDVIVLEA) is an FAD binding site. Residues 860 to 890 (DLSPNLSDSSPSSKKSEENSNSNTADSTELQ) form a disordered region. Positions 861–882 (LSPNLSDSSPSSKKSEENSNSN) are enriched in low complexity. Position 866 is a phosphoserine (Ser-866).

The protein belongs to the flavin monoamine oxidase family. As to quaternary structure, component of a complex that contains at least HDAC1/Rpd3, CoRest and Su(var)3-3/Hdm. It depends on FAD as a cofactor.

The protein resides in the nucleus. It is found in the chromosome. Probable histone demethylase that specifically demethylates 'Lys-4' of histone H3, a specific tag for epigenetic transcriptional activation, thereby acting as a corepressor. Required for heterochromatic gene silencing. Acts by oxidizing the substrate by FAD to generate the corresponding imine that is subsequently hydrolyzed. Demethylates both mono- and tri-methylated 'Lys-4' of histone H3. May also demethylate 'Lys-9' of histone H3, Plays a role in the repression of neuronal genes. This is Possible lysine-specific histone demethylase 1 (Su(var)3-3) from Drosophila melanogaster (Fruit fly).